A 167-amino-acid chain; its full sequence is Small ribosomal subunit protein uS5 (167 aa).

The 64-residue stretch at 12 to 75 (LQEKLITVNR…EQARRNMITI (64 aa)) folds into the S5 DRBM domain.

The protein belongs to the universal ribosomal protein uS5 family. As to quaternary structure, part of the 30S ribosomal subunit. Contacts proteins S4 and S8.

Functionally, with S4 and S12 plays an important role in translational accuracy. Located at the back of the 30S subunit body where it stabilizes the conformation of the head with respect to the body. The sequence is that of Small ribosomal subunit protein uS5 from Buchnera aphidicola subsp. Acyrthosiphon pisum (strain APS) (Acyrthosiphon pisum symbiotic bacterium).